Reading from the N-terminus, the 195-residue chain is Imidazoleglycerol-phosphate dehydratase (195 aa).

It belongs to the imidazoleglycerol-phosphate dehydratase family.

It is found in the cytoplasm. It carries out the reaction D-erythro-1-(imidazol-4-yl)glycerol 3-phosphate = 3-(imidazol-4-yl)-2-oxopropyl phosphate + H2O. It functions in the pathway amino-acid biosynthesis; L-histidine biosynthesis; L-histidine from 5-phospho-alpha-D-ribose 1-diphosphate: step 6/9. The polypeptide is Imidazoleglycerol-phosphate dehydratase (Citrifermentans bemidjiense (strain ATCC BAA-1014 / DSM 16622 / JCM 12645 / Bem) (Geobacter bemidjiensis)).